Consider the following 35-residue polypeptide: Cupiennin-2e (35 aa).

Position 35 is a glutamic acid 1-amide (Glu-35).

In terms of tissue distribution, expressed by the venom gland.

The protein localises to the secreted. This is Cupiennin-2e from Cupiennius salei (American wandering spider).